We begin with the raw amino-acid sequence, 349 residues long: Isopentenyl-diphosphate delta-isomerase (349 aa).

6-7 (RK) contacts substrate. Residues 62 to 64 (AMT), Ser93, and Asn122 each bind FMN. Gln152 contacts substrate. A Mg(2+)-binding site is contributed by Glu153. Residues Lys184, Thr214, 259–261 (GVR), and 280–281 (AG) each bind FMN.

Belongs to the IPP isomerase type 2 family. Homooctamer. Dimer of tetramers. The cofactor is FMN. NADPH serves as cofactor. Requires Mg(2+) as cofactor.

Its subcellular location is the cytoplasm. It catalyses the reaction isopentenyl diphosphate = dimethylallyl diphosphate. Functionally, involved in the biosynthesis of isoprenoids. Catalyzes the 1,3-allylic rearrangement of the homoallylic substrate isopentenyl (IPP) to its allylic isomer, dimethylallyl diphosphate (DMAPP). This is Isopentenyl-diphosphate delta-isomerase from Geobacillus sp. (strain WCH70).